A 752-amino-acid chain; its full sequence is Protein GCN20 (752 aa).

N-acetylalanine is present on A2. 2 consecutive ABC transporter domains span residues 199 to 464 and 532 to 748; these read IHID…RKNA and IQLQ…AAGV. Residues 232–239 and 565–572 each bind ATP; these read GQNGIGKS and GANGCGKT.

Belongs to the ABC transporter superfamily. ABCF family. EF3 subfamily. Interacts (via N-terminus) with GCN1 (via C-terminus); this interaction stimulates GCN2 kinase activity in response to amino acid starvation. The GCN1-GCN20 complex interacts with GCN2 on translating ribosomes in amino acid-starved cells; this association stimulates GCN2 kinase activation by uncharged tRNAs, and hence allowing GCN4 translational activation and derepression of amino acid biosynthetic genes. Associates with ribosomes.

Functionally, acts as a positive activator of the GCN2 protein kinase activity in response to in response to low amino acid, carbon, or purine availability. Component of the GCN1-GCN20 complex that forms a complex with GCN2 on translating ribosomes; during this process, GCN20 helps GCN1 to act as a chaperone to facilitate delivery of uncharged tRNAs that enter the A site of ribosomes to the tRNA-binding domain of GCN2, and hence stimulating GCN2 kinase activity. Participates in gene-specific mRNA translation activation, such as the transcriptional activator GCN4, by promoting the GCN2-mediated phosphorylation of eukaryotic translation initiation factor 2 (eIF-2-alpha/SUI2) on 'Ser-52', and hence allowing GCN4-mediated reprogramming of amino acid biosynthetic gene expression to alleviate nutrient depletion. This chain is Protein GCN20, found in Saccharomyces cerevisiae (strain ATCC 204508 / S288c) (Baker's yeast).